A 393-amino-acid chain; its full sequence is Methylthioribose kinase (393 aa).

ATP-binding positions include Asn38, Lys53, and 107–109; that span reads EDL. Substrate is bound at residue Asp225. An ATP-binding site is contributed by 242–244; that stretch reads DPE. Residue Arg332 coordinates substrate.

This sequence belongs to the methylthioribose kinase family. Homodimer.

The catalysed reaction is 5-(methylsulfanyl)-D-ribose + ATP = 5-(methylsulfanyl)-alpha-D-ribose 1-phosphate + ADP + H(+). Its pathway is amino-acid biosynthesis; L-methionine biosynthesis via salvage pathway; S-methyl-5-thio-alpha-D-ribose 1-phosphate from S-methyl-5'-thioadenosine (hydrolase route): step 2/2. In terms of biological role, catalyzes the phosphorylation of methylthioribose into methylthioribose-1-phosphate. In Bacillus cereus (strain ZK / E33L), this protein is Methylthioribose kinase.